Here is a 192-residue protein sequence, read N- to C-terminus: UPF0301 protein Bcep1808_0798 (192 aa).

This sequence belongs to the UPF0301 (AlgH) family.

The protein is UPF0301 protein Bcep1808_0798 of Burkholderia vietnamiensis (strain G4 / LMG 22486) (Burkholderia cepacia (strain R1808)).